The following is an 810-amino-acid chain: Phenylalanine--tRNA ligase beta subunit (810 aa).

One can recognise a tRNA-binding domain in the interval 39-151; the sequence is RTWAAGVVVG…AGLQAGQPVG (113 aa). The region spanning 408 to 494 is the B5 domain; sequence EPEHSITLRL…RLYGYDNFGE (87 aa). 4 residues coordinate Mg(2+): Asp-472, Asp-478, Glu-481, and Glu-482. The region spanning 716 to 809 is the FDX-ACB domain; it reads SSFPASDRDL…LVERFRVTLR (94 aa).

Belongs to the phenylalanyl-tRNA synthetase beta subunit family. Type 1 subfamily. In terms of assembly, tetramer of two alpha and two beta subunits. Requires Mg(2+) as cofactor.

It localises to the cytoplasm. It carries out the reaction tRNA(Phe) + L-phenylalanine + ATP = L-phenylalanyl-tRNA(Phe) + AMP + diphosphate + H(+). The protein is Phenylalanine--tRNA ligase beta subunit (pheT) of Synechococcus elongatus (strain ATCC 33912 / PCC 7942 / FACHB-805) (Anacystis nidulans R2).